Reading from the N-terminus, the 505-residue chain is Tyrosine-protein kinase FRK (505 aa).

A phosphoserine mark is found at Ser-37 and Ser-40. The 69-residue stretch at 42–110 (RHGHYFVALF…PSNYVAEDRS (69 aa)) folds into the SH3 domain. The region spanning 116–208 (WFFGAIGRSD…GLCVKLGKPC (93 aa)) is the SH2 domain. Thr-178 is modified (phosphothreonine). In terms of domain architecture, Protein kinase spans 234-491 (IQLLKRLGSG…TLRWKLEDYF (258 aa)). Residues 240 to 248 (LGSGQFGEV) and Lys-262 contribute to the ATP site. Residue Asp-354 is the Proton acceptor of the active site. Residue Tyr-387 is modified to Phosphotyrosine; by autocatalysis.

This sequence belongs to the protein kinase superfamily. Tyr protein kinase family. SRC subfamily. Interacts (via the SH3-domain) with PTEN. Interacts with RB1. Predominantly expressed in epithelial derived cell lines and tissues, especially normal liver, kidney, breast and colon.

Its subcellular location is the cytoplasm. It is found in the nucleus. The catalysed reaction is L-tyrosyl-[protein] + ATP = O-phospho-L-tyrosyl-[protein] + ADP + H(+). Its function is as follows. Non-receptor tyrosine-protein kinase that negatively regulates cell proliferation. Positively regulates PTEN protein stability through phosphorylation of PTEN on 'Tyr-336', which in turn prevents its ubiquitination and degradation, possibly by reducing its binding to NEDD4. May function as a tumor suppressor. In Homo sapiens (Human), this protein is Tyrosine-protein kinase FRK (FRK).